The sequence spans 198 residues: Nucleoid occlusion factor SlmA (198 aa).

Residues 10 to 70 enclose the HTH tetR-type domain; the sequence is NRREEILQSL…SLIEFIEDSL (61 aa). A DNA-binding region (H-T-H motif) is located at residues 33-52; sequence TTAKLAASVGVSEAALYRHF. A coiled-coil region spans residues 117-144; sequence EQDRLQGRINQLFERIEAQLRQVLREKR.

This sequence belongs to the nucleoid occlusion factor SlmA family. As to quaternary structure, homodimer. Interacts with FtsZ.

Its subcellular location is the cytoplasm. The protein localises to the nucleoid. Required for nucleoid occlusion (NO) phenomenon, which prevents Z-ring formation and cell division over the nucleoid. Acts as a DNA-associated cell division inhibitor that binds simultaneously chromosomal DNA and FtsZ, and disrupts the assembly of FtsZ polymers. SlmA-DNA-binding sequences (SBS) are dispersed on non-Ter regions of the chromosome, preventing FtsZ polymerization at these regions. This is Nucleoid occlusion factor SlmA from Salmonella agona (strain SL483).